Here is a 145-residue protein sequence, read N- to C-terminus: Large ribosomal subunit protein uL14m (145 aa).

The transit peptide at 1–30 (MAALTGLWGSFAHVSRAFSQRCFSTSGSLS) directs the protein to the mitochondrion.

The protein belongs to the universal ribosomal protein uL14 family. In terms of assembly, component of the mitochondrial ribosome large subunit (39S) which comprises a 16S rRNA and about 50 distinct proteins. Interacts with MALSU1.

Its subcellular location is the mitochondrion. Functionally, may form part of 2 intersubunit bridges in the assembled ribosome. Upon binding to MALSU1, intersubunit bridge formation is blocked, preventing ribosome formation and repressing translation. The chain is Large ribosomal subunit protein uL14m (Mrpl14) from Mus musculus (Mouse).